Reading from the N-terminus, the 507-residue chain is Maturase K (507 aa).

It belongs to the intron maturase 2 family. MatK subfamily.

It localises to the plastid. It is found in the chloroplast. Functionally, usually encoded in the trnK tRNA gene intron. Probably assists in splicing its own and other chloroplast group II introns. The sequence is that of Maturase K from Lyonia lucida (Fetterbush).